Consider the following 431-residue polypeptide: Histidinol dehydrogenase (431 aa).

Positions 127, 189, and 212 each coordinate NAD(+). Ser237, Gln259, and His262 together coordinate substrate. Gln259 and His262 together coordinate Zn(2+). Residues Glu326 and His327 each act as proton acceptor in the active site. Residues His327, Asp360, Glu414, and His419 each contribute to the substrate site. Asp360 lines the Zn(2+) pocket. His419 provides a ligand contact to Zn(2+).

Belongs to the histidinol dehydrogenase family. Zn(2+) is required as a cofactor.

The enzyme catalyses L-histidinol + 2 NAD(+) + H2O = L-histidine + 2 NADH + 3 H(+). Its pathway is amino-acid biosynthesis; L-histidine biosynthesis; L-histidine from 5-phospho-alpha-D-ribose 1-diphosphate: step 9/9. Catalyzes the sequential NAD-dependent oxidations of L-histidinol to L-histidinaldehyde and then to L-histidine. This Xanthomonas oryzae pv. oryzae (strain KACC10331 / KXO85) protein is Histidinol dehydrogenase.